The primary structure comprises 120 residues: Myohemerythrin (120 aa).

7 residues coordinate Fe cation: histidine 26, histidine 56, glutamate 60, histidine 75, histidine 79, histidine 108, and aspartate 113.

Belongs to the hemerythrin family.

Myohemerythrin is an oxygen-binding protein found in the retractor muscles of certain worms. The oxygen-binding site contains two iron atoms. The sequence is that of Myohemerythrin from Sipunculus nudus (Sipunculan worm).